We begin with the raw amino-acid sequence, 565 residues long: MTTREFDYIICGAGSAGNVLATRLTEDPGVTVLLLEAGGPDYRFDFRTQMPAALAYPLQGRRYNWAYETDPEPHMNHRRMECGRGKGLGGSSLINGMCYIRGNALDYDNWATHKGLEDWAYLDCLPYFRKAETRDVGPNDYHGGDGPVSVTTSKPGVNPLFEAMVEAGVQAGYPRTDDLNGYQQEGFGPMDRTVTPRGRRASTARGYLDQARARPNLEIVTHALADRILFSGKRATGVTFLHGSARVTAHARREVLVCSGAIASPQLLQRSGVGPGEWLRELDIPVVLDLPGVGRNLQDHLEMYIQFECKEPVSLYPALKWWNQPKIGLEWMLNGTGLGASNHFEAGGFIRTRDDDPWPNIQYHFLPVAINYNGSNAIEMHGFQAHVGSMRSPSRGRVKLKSRDPHAHPSILFNYMAEALDWREFRDAIRATREIMRQPALDRFRGRELNPGADLKSDNELDTFVRARAETAFHPSCSCKMGYDDMAVVDNEGRVHGIDGLRVVDASIMPIITTGNLNAPTIMIAEKIADRIRKHKPLERSNAQYYVANGAPARGGKPARAPAVV.

Residue 7-36 coordinates FAD; the sequence is DYIICGAGSAGNVLATRLTEDPGVTVLLLE. The active-site Proton acceptor is H474.

The protein belongs to the GMC oxidoreductase family. FAD serves as cofactor.

The catalysed reaction is choline + A = betaine aldehyde + AH2. It catalyses the reaction betaine aldehyde + NAD(+) + H2O = glycine betaine + NADH + 2 H(+). The protein operates within amine and polyamine biosynthesis; betaine biosynthesis via choline pathway; betaine aldehyde from choline (cytochrome c reductase route): step 1/1. Functionally, involved in the biosynthesis of the osmoprotectant glycine betaine. Catalyzes the oxidation of choline to betaine aldehyde and betaine aldehyde to glycine betaine at the same rate. The protein is Oxygen-dependent choline dehydrogenase of Burkholderia pseudomallei (strain 1710b).